Here is a 309-residue protein sequence, read N- to C-terminus: General transcription factor IIH subunit 3 (309 aa).

The C4-type zinc-finger motif lies at 269–286; that stretch reads CSVCLSIFCNFSPICTTC.

It belongs to the TFB4 family. Part of a TFIID-containing RNA polymerase II pre-initiation complex that is composed of TBP and at least GTF2A1, GTF2A2, GTF2E1, GTF2E2, GTF2F1, GTF2H2, GTF2H3, GTF2H4, GTF2H5, GTF2B, TCEA1, ERCC2, ERCC3, TAF1, TAF2, TAF3, TAF4, TAF5, TAF6, TAF7, TAF8, TAF9, TAF10, TAF11, TAF12 and TAF13. Component of the 7-subunit TFIIH core complex composed of XPB/ERCC3, XPD/ERCC2, GTF2H1, GTF2H2, GTF2H3, GTF2H4 and GTF2H5, which is active in NER. The core complex associates with the 3-subunit CDK-activating kinase (CAK) module composed of CCNH/cyclin H, CDK7 and MNAT1 to form the 10-subunit holoenzyme (holo-TFIIH) active in transcription. Interacts with RARA; the interaction requires prior phosphorylation of RARA on 'Ser-369' which then enhances interaction of RARA with CDK7.

It localises to the nucleus. Component of the general transcription and DNA repair factor IIH (TFIIH) core complex, which is involved in general and transcription-coupled nucleotide excision repair (NER) of damaged DNA and, when complexed to CAK, in RNA transcription by RNA polymerase II. In NER, TFIIH acts by opening DNA around the lesion to allow the excision of the damaged oligonucleotide and its replacement by a new DNA fragment. In transcription, TFIIH has an essential role in transcription initiation. When the pre-initiation complex (PIC) has been established, TFIIH is required for promoter opening and promoter escape. Phosphorylation of the C-terminal tail (CTD) of the largest subunit of RNA polymerase II by the kinase module CAK controls the initiation of transcription. The sequence is that of General transcription factor IIH subunit 3 (GTF2H3) from Bos taurus (Bovine).